The sequence spans 94 residues: Small ribosomal subunit protein uS19 (94 aa).

It belongs to the universal ribosomal protein uS19 family.

Its function is as follows. Protein S19 forms a complex with S13 that binds strongly to the 16S ribosomal RNA. The polypeptide is Small ribosomal subunit protein uS19 (Desulforudis audaxviator (strain MP104C)).